The chain runs to 366 residues: tRNA/tmRNA (uracil-C(5))-methyltransferase (366 aa).

The S-adenosyl-L-methionine site is built by Gln190, Tyr218, Asn223, Glu239, and Asp299. The active-site Nucleophile is the Cys324. Catalysis depends on Glu358, which acts as the Proton acceptor.

It belongs to the class I-like SAM-binding methyltransferase superfamily. RNA M5U methyltransferase family. TrmA subfamily.

The catalysed reaction is uridine(54) in tRNA + S-adenosyl-L-methionine = 5-methyluridine(54) in tRNA + S-adenosyl-L-homocysteine + H(+). It catalyses the reaction uridine(341) in tmRNA + S-adenosyl-L-methionine = 5-methyluridine(341) in tmRNA + S-adenosyl-L-homocysteine + H(+). Dual-specificity methyltransferase that catalyzes the formation of 5-methyluridine at position 54 (m5U54) in all tRNAs, and that of position 341 (m5U341) in tmRNA (transfer-mRNA). In Escherichia coli O7:K1 (strain IAI39 / ExPEC), this protein is tRNA/tmRNA (uracil-C(5))-methyltransferase.